The primary structure comprises 259 residues: Ubiquinone/menaquinone biosynthesis C-methyltransferase UbiE (259 aa).

S-adenosyl-L-methionine contacts are provided by residues threonine 82, aspartate 103, 131–132, and serine 148; that span reads NA.

The protein belongs to the class I-like SAM-binding methyltransferase superfamily. MenG/UbiE family.

It catalyses the reaction a 2-demethylmenaquinol + S-adenosyl-L-methionine = a menaquinol + S-adenosyl-L-homocysteine + H(+). The catalysed reaction is a 2-methoxy-6-(all-trans-polyprenyl)benzene-1,4-diol + S-adenosyl-L-methionine = a 5-methoxy-2-methyl-3-(all-trans-polyprenyl)benzene-1,4-diol + S-adenosyl-L-homocysteine + H(+). It participates in quinol/quinone metabolism; menaquinone biosynthesis; menaquinol from 1,4-dihydroxy-2-naphthoate: step 2/2. The protein operates within cofactor biosynthesis; ubiquinone biosynthesis. In terms of biological role, methyltransferase required for the conversion of demethylmenaquinol (DMKH2) to menaquinol (MKH2) and the conversion of 2-polyprenyl-6-methoxy-1,4-benzoquinol (DDMQH2) to 2-polyprenyl-3-methyl-6-methoxy-1,4-benzoquinol (DMQH2). This chain is Ubiquinone/menaquinone biosynthesis C-methyltransferase UbiE, found in Vibrio parahaemolyticus serotype O3:K6 (strain RIMD 2210633).